The sequence spans 176 residues: Flavodoxin 1 (176 aa).

Residues threonine 4 to serine 165 form the Flavodoxin-like domain.

The protein belongs to the flavodoxin family. FMN is required as a cofactor.

Its function is as follows. Low-potential electron donor to a number of redox enzymes (Potential). Involved in the reactivation of inactive cob(II)alamin in methionine synthase. The protein is Flavodoxin 1 (fldA) of Escherichia coli O157:H7.